Consider the following 751-residue polypeptide: Glutamate carboxypeptidase 2 (751 aa).

The Cytoplasmic portion of the chain corresponds to 1–19 (MWNPLHETDSTSVAWRRPR). A Phosphoserine modification is found at Ser-10. A helical; Signal-anchor for type II membrane protein membrane pass occupies residues 20 to 43 (WLCAGALVLAAGLFVLGFLFGWFI). Residues 44–750 (KSPNEAANIS…QAAAGTLREV (707 aa)) are Extracellular-facing. Asn-51, Asn-77, Asn-122, Asn-141, Asn-154, and Asn-196 each carry an N-linked (GlcNAc...) asparagine glycan. Substrate contacts are provided by Arg-211 and Asn-258. Positions 270 and 273 each coordinate Ca(2+). The NAALADase stretch occupies residues 275–588 (ANEYAYRLQI…QVRGGIVFEL (314 aa)). Asn-337 is a glycosylation site (N-linked (GlcNAc...) asparagine). Positions 378 and 388 each coordinate Zn(2+). Residue Glu-425 participates in substrate binding. The Nucleophile; for NAALADase activity role is filled by Glu-425. Glu-426 provides a ligand contact to Zn(2+). Glu-434 and Glu-437 together coordinate Ca(2+). Residue Asp-454 coordinates Zn(2+). N-linked (GlcNAc...) asparagine glycans are attached at residues Asn-460 and Asn-477. Substrate is bound by residues 518–519 (SG), Asn-520, 535–537 (RAR), Tyr-553, and 553–554 (YH). His-554 lines the Zn(2+) pocket. The N-linked (GlcNAc...) asparagine glycan is linked to Asn-614. Ser-629 functions as the Charge relay system in the catalytic mechanism. N-linked (GlcNAc...) asparagine glycans are attached at residues Asn-639 and Asn-646. Catalysis depends on charge relay system residues Asp-667 and His-690. Position 700–701 (700–701 (KY)) interacts with substrate.

It belongs to the peptidase M28 family. M28B subfamily. Homodimer. It depends on Zn(2+) as a cofactor. In terms of tissue distribution, high expression in the duodenum and in the jejunum brush-border membrane. Weak expression in kidney.

Its subcellular location is the cell membrane. The enzyme catalyses Release of an unsubstituted, C-terminal glutamyl residue, typically from Ac-Asp-Glu or folylpoly-gamma-glutamates.. With respect to regulation, the NAALADase activity is inhibited by quisqualic acid, beta-NAAG and 2-(phosphonomethyl) pentanedioic acid (PMPA). Ethanol ingestion decreases the folate hydrolase activity by 50%. Its function is as follows. Has both folate hydrolase and N-acetylated-alpha-linked-acidic dipeptidase (NAALADase) activity. Has a preference for tri-alpha-glutamate peptides. In the intestine, required for the uptake of folate. In the brain, modulates excitatory neurotransmission through the hydrolysis of the neuropeptide, N-aceylaspartylglutamate (NAAG), thereby releasing glutamate. Also exhibits a dipeptidyl-peptidase IV type activity. In vitro, cleaves Gly-Pro-AMC. This chain is Glutamate carboxypeptidase 2 (FOLH1), found in Sus scrofa (Pig).